We begin with the raw amino-acid sequence, 171 residues long: Ribosome maturation factor RimM (171 aa).

The region spanning 97–170 is the PRC barrel domain; sequence EGEYYYHEII…LVTIHVMEGL (74 aa).

Belongs to the RimM family. In terms of assembly, binds ribosomal protein uS19.

Its subcellular location is the cytoplasm. Its function is as follows. An accessory protein needed during the final step in the assembly of 30S ribosomal subunit, possibly for assembly of the head region. Essential for efficient processing of 16S rRNA. May be needed both before and after RbfA during the maturation of 16S rRNA. It has affinity for free ribosomal 30S subunits but not for 70S ribosomes. This Bacillus cereus (strain ZK / E33L) protein is Ribosome maturation factor RimM.